The chain runs to 1612 residues: uncharacterized protein (1612 aa).

Positions 23-52 form a coiled coil; sequence ENKNIEMTTLKDKKEMKNENLSKINVKKEN. Over residues 46-93 the composition is skewed to basic and acidic residues; the sequence is INVKKENHDKNHDKNHDKNHDKNHDKNHDKNHDKNHDKNHDKNHDKNH. Disordered stretches follow at residues 46-94 and 369-400; these read INVK…KNHV and EDDN…HEIQ. Polar residues predominate over residues 375-394; it reads DNPLYSNNNTLKEQNTSTPL. A helical transmembrane segment spans residues 479-499; it reads FIVTLSEICLILTPHYVNIIN. 4 disordered regions span residues 698–777, 992–1037, 1091–1157, and 1257–1291; these read TSLT…EKKL, NELD…KNDP, SGKS…RNMS, and NQTT…NQDK. A compositionally biased stretch (basic and acidic residues) spans 708–777; that stretch reads KNDEIKKTGE…KKKTGEEKKL (70 aa). Low complexity-rich tracts occupy residues 996–1028, 1102–1140, and 1257–1271; these read NNNN…NNNN, SNNN…NSTN, and NQTT…QTSN. Coiled coils occupy residues 1338 to 1362, 1444 to 1469, and 1553 to 1601; these read YCNN…INNK, SNKK…IDND, and NMED…KFLT. Basic and acidic residues predominate over residues 1554–1566; the sequence is MEDEKNEKLNDKE. Residues 1554 to 1612 are disordered; sequence MEDEKNEKLNDKEGEYEDVTENLNEQEAEEEAEEEAEEEEEEEDKFLTPEHLPINVEIK. The span at 1567 to 1597 shows a compositional bias: acidic residues; that stretch reads GEYEDVTENLNEQEAEEEAEEEAEEEEEEED.

The protein resides in the membrane. This is an uncharacterized protein from Plasmodium falciparum (isolate 3D7).